The primary structure comprises 703 residues: Epidermal growth factor receptor (703 aa).

The N-terminal stretch at 1-30 is a signal peptide; sequence MGVRSPLSASGPRGAAVLVLLLLGVALCSA. Over 31 to 654 the chain is Extracellular; the sequence is VEEKKVCQGT…GCPNGSKTPS (624 aa). Cys-37 and Cys-64 are disulfide-bonded. N-linked (GlcNAc...) asparagine glycosylation is found at Asn-134, Asn-190, and Asn-200. 13 disulfide bridges follow: Cys-164–Cys-194, Cys-197–Cys-206, Cys-201–Cys-214, Cys-222–Cys-230, Cys-226–Cys-238, Cys-239–Cys-247, Cys-243–Cys-255, Cys-258–Cys-267, Cys-271–Cys-298, Cys-302–Cys-314, Cys-318–Cys-333, Cys-336–Cys-340, and Cys-344–Cys-369. Residues Asn-359, Asn-368, and Asn-420 are each glycosylated (N-linked (GlcNAc...) asparagine). 11 disulfide bridges follow: Cys-477-Cys-506, Cys-513-Cys-522, Cys-517-Cys-530, Cys-533-Cys-542, Cys-546-Cys-562, Cys-565-Cys-581, Cys-569-Cys-589, Cys-592-Cys-601, Cys-605-Cys-627, Cys-630-Cys-638, and Cys-634-Cys-646. N-linked (GlcNAc...) asparagine glycans are attached at residues Asn-573 and Asn-578. N-linked (GlcNAc...) asparagine glycosylation is found at Asn-613 and Asn-633. The N-linked (GlcNAc...) asparagine glycan is linked to Asn-648. Residues 655-667 form a helical membrane-spanning segment; it reads IAAGVVGGLLCLV. Topologically, residues 668 to 703 are cytoplasmic; it reads VVGLGIGLYLRRRHIVRKRTLRRLLQERELVEPLTP. 2 positions are modified to phosphothreonine: Thr-687 and Thr-702.

This sequence belongs to the protein kinase superfamily. Tyr protein kinase family. EGF receptor subfamily. As to quaternary structure, binding of the ligand triggers homo- and/or heterodimerization of the receptor triggering its autophosphorylation. In terms of processing, phosphorylated. Autophosphorylates.

Its subcellular location is the cell membrane. The protein resides in the endoplasmic reticulum membrane. It is found in the golgi apparatus membrane. The protein localises to the nucleus membrane. It localises to the endosome. Its subcellular location is the endosome membrane. The protein resides in the nucleus. The enzyme catalyses L-tyrosyl-[protein] + ATP = O-phospho-L-tyrosyl-[protein] + ADP + H(+). With respect to regulation, endocytosis and inhibition of the activated EGFR by phosphatases constitute immediate regulatory mechanisms. Moreover, inducible feedback inhibitors may constitute alternative regulatory mechanisms for the EGFR signaling. Its function is as follows. Receptor tyrosine kinase binding ligands of the EGF family and activating several signaling cascades to convert extracellular cues into appropriate cellular responses. Known ligands include EGF and TGFA/TGF-alpha. Ligand binding triggers receptor homo- and/or heterodimerization and autophosphorylation on key cytoplasmic residues. The phosphorylated receptor recruits adapter proteins like GRB2 which in turn activates complex downstream signaling cascades. Activates at least 4 major downstream signaling cascades including the RAS-RAF-MEK-ERK, PI3 kinase-AKT, PLCgamma-PKC and STATs modules. May also activate the NF-kappa-B signaling cascade. The polypeptide is Epidermal growth factor receptor (EGFR) (Gallus gallus (Chicken)).